Consider the following 687-residue polypeptide: Light-independent protochlorophyllide reductase subunit B (687 aa).

A [4Fe-4S] cluster-binding site is contributed by Asp36. Asp441 functions as the Proton donor in the catalytic mechanism. 576–577 (GM) is a binding site for substrate.

It belongs to the ChlB/BchB/BchZ family. Protochlorophyllide reductase is composed of three subunits; ChlL, ChlN and ChlB. Forms a heterotetramer of two ChlB and two ChlN subunits. It depends on [4Fe-4S] cluster as a cofactor.

The protein localises to the plastid. It is found in the chloroplast. The catalysed reaction is chlorophyllide a + oxidized 2[4Fe-4S]-[ferredoxin] + 2 ADP + 2 phosphate = protochlorophyllide a + reduced 2[4Fe-4S]-[ferredoxin] + 2 ATP + 2 H2O. It functions in the pathway porphyrin-containing compound metabolism; chlorophyll biosynthesis (light-independent). Its function is as follows. Component of the dark-operative protochlorophyllide reductase (DPOR) that uses Mg-ATP and reduced ferredoxin to reduce ring D of protochlorophyllide (Pchlide) to form chlorophyllide a (Chlide). This reaction is light-independent. The NB-protein (ChlN-ChlB) is the catalytic component of the complex. The sequence is that of Light-independent protochlorophyllide reductase subunit B from Chlamydomonas reinhardtii (Chlamydomonas smithii).